We begin with the raw amino-acid sequence, 359 residues long: 4-hydroxy-3-methylbut-2-en-1-yl diphosphate synthase (flavodoxin) (359 aa).

[4Fe-4S] cluster contacts are provided by cysteine 264, cysteine 267, cysteine 299, and glutamate 306.

The protein belongs to the IspG family. It depends on [4Fe-4S] cluster as a cofactor.

It carries out the reaction (2E)-4-hydroxy-3-methylbut-2-enyl diphosphate + oxidized [flavodoxin] + H2O + 2 H(+) = 2-C-methyl-D-erythritol 2,4-cyclic diphosphate + reduced [flavodoxin]. The protein operates within isoprenoid biosynthesis; isopentenyl diphosphate biosynthesis via DXP pathway; isopentenyl diphosphate from 1-deoxy-D-xylulose 5-phosphate: step 5/6. Functionally, converts 2C-methyl-D-erythritol 2,4-cyclodiphosphate (ME-2,4cPP) into 1-hydroxy-2-methyl-2-(E)-butenyl 4-diphosphate. The polypeptide is 4-hydroxy-3-methylbut-2-en-1-yl diphosphate synthase (flavodoxin) (Helicobacter pylori (strain ATCC 700392 / 26695) (Campylobacter pylori)).